The following is a 267-amino-acid chain: Ribosomal RNA small subunit methyltransferase A (267 aa).

Positions 18, 20, 45, 66, 91, and 112 each coordinate S-adenosyl-L-methionine.

The protein belongs to the class I-like SAM-binding methyltransferase superfamily. rRNA adenine N(6)-methyltransferase family. RsmA subfamily.

The protein localises to the cytoplasm. The catalysed reaction is adenosine(1518)/adenosine(1519) in 16S rRNA + 4 S-adenosyl-L-methionine = N(6)-dimethyladenosine(1518)/N(6)-dimethyladenosine(1519) in 16S rRNA + 4 S-adenosyl-L-homocysteine + 4 H(+). In terms of biological role, specifically dimethylates two adjacent adenosines (A1518 and A1519) in the loop of a conserved hairpin near the 3'-end of 16S rRNA in the 30S particle. May play a critical role in biogenesis of 30S subunits. In Shewanella woodyi (strain ATCC 51908 / MS32), this protein is Ribosomal RNA small subunit methyltransferase A.